The primary structure comprises 322 residues: HPr kinase/phosphorylase (322 aa).

Active-site residues include H146 and K167. 161-168 is a binding site for ATP; sequence GDSGLGKS. Residue S168 coordinates Mg(2+). The active-site Proton acceptor; for phosphorylation activity. Proton donor; for dephosphorylation activity is D185. The interval 209-218 is important for the catalytic mechanism of both phosphorylation and dephosphorylation; it reads LEVRGLGLLD. E210 contributes to the Mg(2+) binding site. R250 is an active-site residue. The segment at 271–276 is important for the catalytic mechanism of dephosphorylation; sequence QVAAGR.

It belongs to the HPrK/P family. Homohexamer. Mg(2+) serves as cofactor.

It catalyses the reaction [HPr protein]-L-serine + ATP = [HPr protein]-O-phospho-L-serine + ADP + H(+). The enzyme catalyses [HPr protein]-O-phospho-L-serine + phosphate + H(+) = [HPr protein]-L-serine + diphosphate. Its function is as follows. Catalyzes the ATP- as well as the pyrophosphate-dependent phosphorylation of a specific serine residue in HPr, a phosphocarrier protein of the phosphoenolpyruvate-dependent sugar phosphotransferase system (PTS). HprK/P also catalyzes the pyrophosphate-producing, inorganic phosphate-dependent dephosphorylation (phosphorolysis) of seryl-phosphorylated HPr (P-Ser-HPr). This chain is HPr kinase/phosphorylase, found in Paraburkholderia xenovorans (strain LB400).